The chain runs to 68 residues: DNA-directed RNA polymerase subunit omega (68 aa).

This sequence belongs to the RNA polymerase subunit omega family. In terms of assembly, the RNAP catalytic core consists of 2 alpha, 1 beta, 1 beta' and 1 omega subunit. When a sigma factor is associated with the core the holoenzyme is formed, which can initiate transcription.

It carries out the reaction RNA(n) + a ribonucleoside 5'-triphosphate = RNA(n+1) + diphosphate. Functionally, promotes RNA polymerase assembly. Latches the N- and C-terminal regions of the beta' subunit thereby facilitating its interaction with the beta and alpha subunits. The sequence is that of DNA-directed RNA polymerase subunit omega from Brevibacillus brevis (strain 47 / JCM 6285 / NBRC 100599).